Consider the following 334-residue polypeptide: D-alanine--D-alanine ligase (334 aa).

The ATP-grasp domain occupies 124–329 (KMWFSALGIP…FAQYLSGNIL (206 aa)). Position 154–209 (154–209 (ALAKWGSIFIKAASQGSSVGCYRVDSIEQLASSLEEAFTFSPYVVIEKTITARELE)) interacts with ATP. The Mg(2+) site is built by Asp283, Glu296, and Asn298.

This sequence belongs to the D-alanine--D-alanine ligase family. It depends on Mg(2+) as a cofactor. Mn(2+) is required as a cofactor.

The protein localises to the cytoplasm. The catalysed reaction is 2 D-alanine + ATP = D-alanyl-D-alanine + ADP + phosphate + H(+). It participates in cell wall biogenesis; peptidoglycan biosynthesis. Cell wall formation. This chain is D-alanine--D-alanine ligase, found in Shewanella pealeana (strain ATCC 700345 / ANG-SQ1).